Reading from the N-terminus, the 60-residue chain is uncharacterized protein (60 aa).

A helical membrane pass occupies residues 27-49 (YYWLVSTARMVLGVTILILILIG).

The protein resides in the membrane. This is an uncharacterized protein from Archaeoglobus fulgidus (strain ATCC 49558 / DSM 4304 / JCM 9628 / NBRC 100126 / VC-16).